Here is a 162-residue protein sequence, read N- to C-terminus: UPF0305 protein MmarC5_0909 (162 aa).

The protein belongs to the UPF0305 family.

This chain is UPF0305 protein MmarC5_0909, found in Methanococcus maripaludis (strain C5 / ATCC BAA-1333).